The following is a 72-amino-acid chain: Large ribosomal subunit protein uL29 (72 aa).

The protein belongs to the universal ribosomal protein uL29 family.

In Prochlorococcus marinus (strain AS9601), this protein is Large ribosomal subunit protein uL29.